A 439-amino-acid chain; its full sequence is Structure-specific endonuclease subunit SLX1 homolog (439 aa).

Disordered stretches follow at residues methionine 1–lysine 28 and aspartate 117–leucine 140. A compositionally biased stretch (basic and acidic residues) spans glutamate 125–asparagine 136. The 88-residue stretch at glutamate 166–lysine 253 folds into the GIY-YIG domain. The segment at cysteine 335–cysteine 390 adopts an SLX1-type zinc-finger fold.

This sequence belongs to the SLX1 family. In terms of assembly, forms a heterodimer with him-18/slx-4. A divalent metal cation serves as cofactor.

It localises to the nucleus. Its function is as follows. Catalytic subunit of a heterodimeric structure-specific endonuclease that resolves DNA secondary structures generated during DNA repair and recombination. Has endonuclease activity towards branched DNA substrates, introducing single-strand cuts in duplex DNA close to junctions with ss-DNA (Potential). Has a preference for replication forks over 5' flap structures or Holliday junctions and shows much lower activity toward 3' flap structures. Required for proper crossover distribution through inhibition of crossover formation at the central region of chromosomes. The polypeptide is Structure-specific endonuclease subunit SLX1 homolog (Caenorhabditis briggsae).